The primary structure comprises 129 residues: Serum amyloid A-4 protein (129 aa).

The signal sequence occupies residues 1 to 18; the sequence is MKLLIGILFCTLIMGVTG. Positions 107–121 are enriched in basic and acidic residues; sequence AEEWGRSGQDPDHFR. The segment at 107–129 is disordered; that stretch reads AEEWGRSGQDPDHFRPAGLPKKY.

It belongs to the SAA family. As to quaternary structure, apolipoprotein of the HDL complex.

The protein resides in the secreted. Major acute phase reactant. This chain is Serum amyloid A-4 protein, found in Bos taurus (Bovine).